We begin with the raw amino-acid sequence, 294 residues long: Fatty acyl-CoA reductase Rv0547c (294 aa).

11 residues coordinate NADP(+): S49, S50, I52, R72, D97, L98, N124, Y192, K196, V225, and T227. The active-site Proton acceptor is Y192.

This sequence belongs to the short-chain dehydrogenases/reductases (SDR) family.

Its subcellular location is the host mitochondrion. It carries out the reaction hexadecanal + NADP(+) + CoA = hexadecanoyl-CoA + NADPH + H(+). Functionally, oxidoreductase that promotes the persistence of M.tuberculosis in host macrophages by reprogramming the fatty acid metabolism in host mitochondria. When localized in the host mitochondria, it potentially acts on unknown lipid substrates and converts them into products that directly or indirectly alter the lipid profile of the mitochondria. This change in lipid profile results in increased mitochondrial membrane fluidity, enhanced endogenous fatty acid oxidation and increased mitochondrial spare respiratory capacity. All these events eventually favor M.tuberculosis persistence in the host macrophages. In vitro, can catalyze the NADPH-dependent reduction of palmitoyl-CoA (hexadecanoyl-CoA). This chain is Fatty acyl-CoA reductase Rv0547c, found in Mycobacterium tuberculosis (strain ATCC 25618 / H37Rv).